The following is a 120-amino-acid chain: MISKIDKNKVRLKRHARVRTKLSGTAEKPRLNVYRSNKHIYAQIIDDVKGETLVQASSKDKDIASDSTSKVDLSTKVGEAIAKKASDKGIKEIVFDRGGYLYHGRVKALAEAARESGLEF.

Belongs to the universal ribosomal protein uL18 family. As to quaternary structure, part of the 50S ribosomal subunit; part of the 5S rRNA/L5/L18/L25 subcomplex. Contacts the 5S and 23S rRNAs.

In terms of biological role, this is one of the proteins that bind and probably mediate the attachment of the 5S RNA into the large ribosomal subunit, where it forms part of the central protuberance. In Staphylococcus haemolyticus (strain JCSC1435), this protein is Large ribosomal subunit protein uL18.